A 333-amino-acid polypeptide reads, in one-letter code: Phosphate acyltransferase (333 aa).

Belongs to the PlsX family. As to quaternary structure, homodimer. Probably interacts with PlsY.

The protein localises to the cytoplasm. It catalyses the reaction a fatty acyl-[ACP] + phosphate = an acyl phosphate + holo-[ACP]. Its pathway is lipid metabolism; phospholipid metabolism. Catalyzes the reversible formation of acyl-phosphate (acyl-PO(4)) from acyl-[acyl-carrier-protein] (acyl-ACP). This enzyme utilizes acyl-ACP as fatty acyl donor, but not acyl-CoA. This chain is Phosphate acyltransferase, found in Enterococcus faecalis (strain ATCC 700802 / V583).